The chain runs to 197 residues: Penicillin-binding protein activator LpoB (197 aa).

Positions 1–17 are cleaved as a signal peptide; that stretch reads MIKRMSGIALAALLLSG. A lipid anchor (N-palmitoyl cysteine) is attached at Cys18. Cys18 carries the S-diacylglycerol cysteine lipid modification. A disordered region spans residues 23–57; that stretch reads PRGETPSQPPAPTTPAKPSVVPTPTPPVVTPVPQP. The span at 29 to 57 shows a compositional bias: pro residues; that stretch reads SQPPAPTTPAKPSVVPTPTPPVVTPVPQP.

It belongs to the LpoB family. Interacts with PBP1b.

The protein localises to the cell outer membrane. Functionally, regulator of peptidoglycan synthesis that is essential for the function of penicillin-binding protein 1B (PBP1b). This is Penicillin-binding protein activator LpoB from Edwardsiella piscicida.